The primary structure comprises 404 residues: Cytoplasmic tRNA 2-thiolation protein 2 (404 aa).

The protein belongs to the CTU2/NCS2 family.

The protein localises to the cytoplasm. It participates in tRNA modification; 5-methoxycarbonylmethyl-2-thiouridine-tRNA biosynthesis. In terms of biological role, plays a central role in 2-thiolation of mcm(5)S(2)U at tRNA wobble positions of tRNA(Lys), tRNA(Glu) and tRNA(Gln). May act by forming a heterodimer with NCS6/CTU1 that ligates sulfur from thiocarboxylated URM1 onto the uridine of tRNAs at wobble position. The polypeptide is Cytoplasmic tRNA 2-thiolation protein 2 (Drosophila erecta (Fruit fly)).